The primary structure comprises 176 residues: MSRVGKSPIALQGAEVKLADGAITVKGPLGTITQPVNPLVNVANNDGTLNLAPVNESREANAMSGTMRAIIANAVHGVTKGFERKLTLVGVGYRAQAQGDKLNLSLGFSHPVVHQMPEGVKAETPTQTEIVIKGINKQQVGQVAAEVRGYRPPEPYKGKGVRYSDEVVILKETKKK.

This sequence belongs to the universal ribosomal protein uL6 family. Part of the 50S ribosomal subunit.

Functionally, this protein binds to the 23S rRNA, and is important in its secondary structure. It is located near the subunit interface in the base of the L7/L12 stalk, and near the tRNA binding site of the peptidyltransferase center. In Burkholderia vietnamiensis (strain G4 / LMG 22486) (Burkholderia cepacia (strain R1808)), this protein is Large ribosomal subunit protein uL6.